The primary structure comprises 1610 residues: Adenylate cyclase type 10 (1610 aa).

2 consecutive Guanylate cyclase domains span residues 42 to 179 (VLMF…RLAQ) and 293 to 418 (TIVF…ARMM). 2 residues coordinate Mg(2+): Asp-47 and Ile-48. 47-52 (DISGFT) contacts ATP. Lys-95 provides a ligand contact to hydrogencarbonate. Asp-99 is a binding site for Mg(2+). Positions 99 and 144 each coordinate ATP. Residues Val-167, Arg-176, and Met-337 each coordinate hydrogencarbonate. Residues Val-406 and 412–416 (NLAAR) contribute to the ATP site.

This sequence belongs to the adenylyl cyclase class-4/guanylyl cyclase family. It depends on Mg(2+) as a cofactor. Mn(2+) is required as a cofactor. Cleavage may occur to generate the active 48 kDa form. Detected in airway epithelial cells and testis (at protein level). Weakly expressed in multiple tissues. Expressed in brain, heart, kidney, liver, lung, pancreas, peripheral blood leukocytes, placenta, skeletal muscle, stomach, thymus, airway epithelial cells, duodenum, jejunum and ileum. Very low level of expression in bone.

The protein resides in the cell membrane. It localises to the cytoplasm. The protein localises to the cytoskeleton. Its subcellular location is the perinuclear region. It is found in the nucleus. The protein resides in the cell projection. It localises to the cilium. The protein localises to the mitochondrion. It carries out the reaction ATP = 3',5'-cyclic AMP + diphosphate. Activated by manganese or magnesium ions. In the presence of magnesium ions, the enzyme is activated by bicarbonate. In the presence of manganese ions, the enzyme is inhibited by bicarbonate. In the absence of magnesium and bicarbonate, the enzyme is weakly activated by calcium. Calcium mildly increases the enzyme activity, also in the presence of magnesium ions. Its function is as follows. Catalyzes the formation of the signaling molecule cAMP. May function as sensor that mediates responses to changes in cellular bicarbonate and CO(2) levels. Has a critical role in mammalian spermatogenesis by producing the cAMP which regulates cAMP-responsive nuclear factors indispensable for sperm maturation in the epididymis. Induces capacitation, the maturational process that sperm undergo prior to fertilization. Involved in ciliary beat regulation. The sequence is that of Adenylate cyclase type 10 (ADCY10) from Homo sapiens (Human).